A 271-amino-acid polypeptide reads, in one-letter code: Hydroxyethylthiazole kinase (271 aa).

Substrate is bound at residue M50. Residues R126 and T172 each coordinate ATP. G199 contributes to the substrate binding site.

The protein belongs to the Thz kinase family. Mg(2+) serves as cofactor.

The catalysed reaction is 5-(2-hydroxyethyl)-4-methylthiazole + ATP = 4-methyl-5-(2-phosphooxyethyl)-thiazole + ADP + H(+). It participates in cofactor biosynthesis; thiamine diphosphate biosynthesis; 4-methyl-5-(2-phosphoethyl)-thiazole from 5-(2-hydroxyethyl)-4-methylthiazole: step 1/1. In terms of biological role, catalyzes the phosphorylation of the hydroxyl group of 4-methyl-5-beta-hydroxyethylthiazole (THZ). This is Hydroxyethylthiazole kinase from Akkermansia muciniphila (strain ATCC BAA-835 / DSM 22959 / JCM 33894 / BCRC 81048 / CCUG 64013 / CIP 107961 / Muc).